A 215-amino-acid polypeptide reads, in one-letter code: Cytochrome b6 (215 aa).

Residues 32–52 (IFYCLGGITLTCFLVQVATGF) form a helical membrane-spanning segment. Cys35 contributes to the heme c binding site. Heme b-binding residues include His86 and His100. 3 helical membrane-spanning segments follow: residues 90–110 (ASMMVLMMILHVFRVYLTGGF), 116–136 (LTWVTGVILAVLTVSFGVTGY), and 186–206 (LHTFILPLLTAVFMPMHFLMI). 2 residues coordinate heme b: His187 and His202.

It belongs to the cytochrome b family. PetB subfamily. The 4 large subunits of the cytochrome b6-f complex are cytochrome b6, subunit IV (17 kDa polypeptide, PetD), cytochrome f and the Rieske protein, while the 4 small subunits are PetG, PetL, PetM and PetN. The complex functions as a dimer. It depends on heme b as a cofactor. Heme c is required as a cofactor.

It localises to the plastid. Its subcellular location is the chloroplast thylakoid membrane. Its function is as follows. Component of the cytochrome b6-f complex, which mediates electron transfer between photosystem II (PSII) and photosystem I (PSI), cyclic electron flow around PSI, and state transitions. The sequence is that of Cytochrome b6 from Pinus koraiensis (Korean pine).